The following is a 151-amino-acid chain: Ribonuclease H (151 aa).

Positions 2-143 (SDDWVEIYTD…ADLLANRGVV (142 aa)) constitute an RNase H type-1 domain. Residues aspartate 11, glutamate 49, aspartate 71, and aspartate 135 each contribute to the Mg(2+) site.

The protein belongs to the RNase H family. In terms of assembly, monomer. It depends on Mg(2+) as a cofactor.

The protein resides in the cytoplasm. It carries out the reaction Endonucleolytic cleavage to 5'-phosphomonoester.. Functionally, endonuclease that specifically degrades the RNA of RNA-DNA hybrids. In Stutzerimonas stutzeri (strain A1501) (Pseudomonas stutzeri), this protein is Ribonuclease H.